The chain runs to 316 residues: Olfactory receptor 5AP2 (316 aa).

Topologically, residues 1–34 (MRLMKEVRGRNQTEVTEFLLLGLSDNPDLQGVLF) are extracellular. Residue asparagine 11 is glycosylated (N-linked (GlcNAc...) asparagine). Residues 35-55 (ALFLLIYMANMVGNLGMIVLI) traverse the membrane as a helical segment. A topological domain (cytoplasmic) is located at residue lysine 56. The helical transmembrane segment at 57–77 (IDLCLHTPMYFFLSSLSFVDA) threads the bilayer. Residues 78–104 (SYSSSVTPKMLVNLMAENKAISFHGCA) lie on the Extracellular side of the membrane. The cysteines at positions 103 and 195 are disulfide-linked. Residues 105-125 (AQFYFFGSFLGTECFLLAMMA) traverse the membrane as a helical segment. The Cytoplasmic segment spans residues 126–135 (YDRYAAIWNP). A helical membrane pass occupies residues 136–156 (LLYPVLVSGRICFLLIATSFL). Residues 157 to 210 (AGCGNAAIHTGMTFRLSFCGSNRINHFYCDTPPLLKLSCSDTHFNGIVIMAFSS) lie on the Extracellular side of the membrane. The chain crosses the membrane as a helical span at residues 211–231 (FIVISCVMIVLISYLCIFIAV). Residues 232 to 245 (LKMPSLEGRHKAFS) lie on the Cytoplasmic side of the membrane. Residues 246-266 (TCASYLMAVTIFFGTILFMYL) traverse the membrane as a helical segment. Residues 267-278 (RPTSSYSMEQDK) are Extracellular-facing. A helical membrane pass occupies residues 279-299 (VVSVFYTVIIPVLNPLIYSLK). The Cytoplasmic segment spans residues 300 to 316 (NKDVKKALKKILWKHIL).

This sequence belongs to the G-protein coupled receptor 1 family.

The protein localises to the cell membrane. Functionally, odorant receptor. This chain is Olfactory receptor 5AP2, found in Homo sapiens (Human).